We begin with the raw amino-acid sequence, 995 residues long: S1 RNA-binding domain-containing protein 1 (995 aa).

Positions 23–81 are disordered; that stretch reads SFSELSSASEEDDKEDSAWEPQKKVPRSRKQPPPKESKPKRMPRVKKNAPQISDGSEVV. Residues K84 and K134 each participate in a glycyl lysine isopeptide (Lys-Gly) (interchain with G-Cter in SUMO2) cross-link. The interval 120–165 is disordered; sequence CAAQPHTVRRTKKLKVEEETSKASNLEGESNSSETPSTSTVWGGTC. The segment covering 146–159 has biased composition (low complexity); it reads EGESNSSETPSTST. Residues K166, K167, and K183 each participate in a glycyl lysine isopeptide (Lys-Gly) (interchain with G-Cter in SUMO2) cross-link. K185 is covalently cross-linked (Glycyl lysine isopeptide (Lys-Gly) (interchain with G-Cter in SUMO1); alternate). A Glycyl lysine isopeptide (Lys-Gly) (interchain with G-Cter in SUMO2); alternate cross-link involves residue K185. Positions 258–288 form a coiled coil; the sequence is ADSLREVQQTLEELRAVAKKVHSTIQKIKKE. S861 carries the post-translational modification Phosphoserine. One can recognise an S1 motif domain in the interval 919–992; that stretch reads GTVLTGKVEN…PRSRITLDLI (74 aa). K955 is covalently cross-linked (Glycyl lysine isopeptide (Lys-Gly) (interchain with G-Cter in SUMO2)). Phosphoserine is present on S964.

The polypeptide is S1 RNA-binding domain-containing protein 1 (SRBD1) (Homo sapiens (Human)).